The primary structure comprises 475 residues: MKSELIFLPAPAIGHLVGMVEMAKLFISRHENLSVTVLIAKFYMDTGVDNYNKSLLTNPTPRLTIVNLPETDPQNYMLKPRHAIFPSVIETQKTHVRDIISGMTQSESTQVVGLLADLLFINIMDIANEFNVPTYVYSPAGAGHLGLAFHLQTLNDKKQDVTEFRNSDTELLVPSFANPVPAEVLPSMYVDKEGGYDYLFSLFRRCRESKAIIINTFEELEPYAINSLRMDSMIPPIYPVGPILNLNGDGQNSDEAAVILGWLDDQPPSSVVFLCFGSYGSFQENQVKEIAMGLERSGHRFLWSLRPSIPKGETKLQLKYSNLKEILPVGFLDRTSCVGKVIGWAPQVAVLGHESVGGFLSHCGWNSTLESVWCGVPVATWPMYGEQQLNAFEMVKELGIAVEIEVDYKKDYFNMKNDFIVRAEEIETKIKKLMMDENNSEIRKKVKEMKEKSRAAMSENGSSYNSLAKLFEEIM.

The active-site Proton acceptor is H15. H15 is a binding site for an anthocyanidin. The active-site Charge relay is the D117. UDP-alpha-D-glucose is bound by residues A345, Q347, H362, W365, N366, S367, and E370. An anthocyanidin is bound at residue G385. 2 residues coordinate UDP-alpha-D-glucose: E386 and Q387.

This sequence belongs to the UDP-glycosyltransferase family. Mostly expressed in leaves and flowers, and, to a lower extent, in roots and stems.

The enzyme catalyses (20S)-protopanaxadiol + UDP-alpha-D-glucose = (20S)-ginsenoside C-K + UDP + H(+). The catalysed reaction is (20S)-ginsenoside Rg3 + UDP-alpha-D-glucose = (20S)-ginsenoside Rd + UDP + H(+). It carries out the reaction (20S)-ginsenoside Rh2 + UDP-alpha-D-glucose = (20S)-ginsenoside F2 + UDP + H(+). It catalyses the reaction (20S)-protopanaxatriol + UDP-alpha-D-glucose = (20S)-ginsenoside F1 + UDP + H(+). The enzyme catalyses dammarenediol-II + UDP-alpha-D-glucose = (20S)-20-O-(beta-D-glucosyl)-3-hydroxydammarene + UDP + H(+). The protein operates within secondary metabolite biosynthesis; terpenoid biosynthesis. Functionally, component of the dammarane-type triterpene saponins (e.g. ginsenosides or panaxosides) biosynthetic pathway. Glycosyltransferase that catalyzes the biosynthesis of ginsenoside F1 from protopanaxatriol (PPT). Triggers C20-OH glycosylation of ginsenoside Rg3 to produce ginsenoside Rd. Mediates the conversion of protopanaxadiol (PPD) to the ginsenoside compound K. catalyzes the production of 20S-O-beta-(D-glucosyl)-dammarenediol II form dammarenediol II (DM). This chain is UDP-glycosyltransferase 1, found in Panax ginseng (Korean ginseng).